A 224-amino-acid polypeptide reads, in one-letter code: MDKQQLAKMIDHTILKPEADKASIEKLCKEALEYNFASVCINPTNVELAAKLLKGSEVKVCTVIGFPLGANTMEVKAFETKDAIAKGADEVDMVINIGRLKDKDYEYVEKDIKAVVDAADKKALTKVIIETCLLTEEEKVKACELAKKAGADFVKTSTGFSTGGATPEDIKLMRETVGPEMGVKASGGVRSIEDAEAVIKNGATRIGASASIAICEGKVSDSTY.

The active-site Proton donor/acceptor is Asp-92. Lys-155 functions as the Schiff-base intermediate with acetaldehyde in the catalytic mechanism. Lys-184 functions as the Proton donor/acceptor in the catalytic mechanism.

The protein belongs to the DeoC/FbaB aldolase family. DeoC type 1 subfamily.

The protein resides in the cytoplasm. It carries out the reaction 2-deoxy-D-ribose 5-phosphate = D-glyceraldehyde 3-phosphate + acetaldehyde. The protein operates within carbohydrate degradation; 2-deoxy-D-ribose 1-phosphate degradation; D-glyceraldehyde 3-phosphate and acetaldehyde from 2-deoxy-alpha-D-ribose 1-phosphate: step 2/2. Functionally, catalyzes a reversible aldol reaction between acetaldehyde and D-glyceraldehyde 3-phosphate to generate 2-deoxy-D-ribose 5-phosphate. The sequence is that of Deoxyribose-phosphate aldolase from Clostridium perfringens (strain 13 / Type A).